The chain runs to 630 residues: MDFPTRFDVIVIGGGHAGTEAALAAARMGVKTLLLTHNVETLGQMSCNPAIGGIGKSHLVKEIDALGGAMAEATDKGGIQFRILNSRKGPAVRATRAQADRVLYKAAIRHTLENQPNLWIFQQACDDLIVEQDQVRGVVTQMGLRFHADNVVLTTGTFLGGLIHIGLENYSGGRAGDPPSIALARRLRELPLRVGRLKTGTPPRIDGRSVDFSVMTEQPGDTPIPVMSFLGSKEQHPEQVSCWITHTNARTHEIIAANLDRSPMYSGVIEGIGPRYCPSIEDKIHRFADKESHQVFLEPEGLTTHELYPNGISTSLPFDVQLQIVRSIRGMENAHIVRPGYAIEYDFFDPRDLRYSLETKVIGGLFFAGQINGTTGYEEAGAQGLLAGANAALRSQGKDSWCPRRDEAYIGVLVDDLITLGTQEPYRMFTSRAEYRLILREDNADLRLTEKGRELGLVDDRRWAAFEAKREGIEREEQRLKSTWVRPNTPQGDAIAERFGTPLTHEYNLLNLLSRPEIDYAGLVEITGDAVDNPQVAEQVEIRTKYAGYIDRQQEEIARLRASEDTRLPVDIDYLGISGLSKEIQNKLNQARPETLGQASRIPGVTPAAISLLLIHLKKRASGRQLEQSA.

Residue 13–18 coordinates FAD; it reads GGGHAG. 273–287 contacts NAD(+); sequence GPRYCPSIEDKIHRF.

This sequence belongs to the MnmG family. As to quaternary structure, homodimer. Heterotetramer of two MnmE and two MnmG subunits. Requires FAD as cofactor.

The protein localises to the cytoplasm. Functionally, NAD-binding protein involved in the addition of a carboxymethylaminomethyl (cmnm) group at the wobble position (U34) of certain tRNAs, forming tRNA-cmnm(5)s(2)U34. This chain is tRNA uridine 5-carboxymethylaminomethyl modification enzyme MnmG, found in Pseudomonas aeruginosa (strain LESB58).